The primary structure comprises 160 residues: MAKQKKHPTGTIAQNKKARHDYFIEHRFEAGMVLAGWEVKSLRAGKAQLVDSYVLLKDGEAWLLGSHFTPLTTASTHVIADPTRSRKLLLNQRELEKLFAAVQQKGYACVCLSLYWSKHLVKCEIALGKGKKEYDKRHTERERDSDRELQRAVRTKGKED.

Residues 131 to 160 (KKEYDKRHTERERDSDRELQRAVRTKGKED) are disordered.

It belongs to the SmpB family.

It is found in the cytoplasm. In terms of biological role, required for rescue of stalled ribosomes mediated by trans-translation. Binds to transfer-messenger RNA (tmRNA), required for stable association of tmRNA with ribosomes. tmRNA and SmpB together mimic tRNA shape, replacing the anticodon stem-loop with SmpB. tmRNA is encoded by the ssrA gene; the 2 termini fold to resemble tRNA(Ala) and it encodes a 'tag peptide', a short internal open reading frame. During trans-translation Ala-aminoacylated tmRNA acts like a tRNA, entering the A-site of stalled ribosomes, displacing the stalled mRNA. The ribosome then switches to translate the ORF on the tmRNA; the nascent peptide is terminated with the 'tag peptide' encoded by the tmRNA and targeted for degradation. The ribosome is freed to recommence translation, which seems to be the essential function of trans-translation. This Pseudomonas fluorescens (strain ATCC BAA-477 / NRRL B-23932 / Pf-5) protein is SsrA-binding protein.